A 63-amino-acid chain; its full sequence is uncharacterized protein (63 aa).

This is an uncharacterized protein from Acidianus bottle-shaped virus (isolate Italy/Pozzuoli) (ABV).